The sequence spans 610 residues: Glutamine--fructose-6-phosphate aminotransferase [isomerizing] (610 aa).

Catalysis depends on C2, which acts as the Nucleophile; for GATase activity. In terms of domain architecture, Glutamine amidotransferase type-2 spans 2 to 218 (CGIVGAVAQR…EGDVAEITRR (217 aa)). SIS domains follow at residues 286–426 (AAEI…QQGR) and 459–600 (LATD…VDQP). K605 serves as the catalytic For Fru-6P isomerization activity.

In terms of assembly, homodimer.

It is found in the cytoplasm. It catalyses the reaction D-fructose 6-phosphate + L-glutamine = D-glucosamine 6-phosphate + L-glutamate. Its function is as follows. Catalyzes the first step in hexosamine metabolism, converting fructose-6P into glucosamine-6P using glutamine as a nitrogen source. The chain is Glutamine--fructose-6-phosphate aminotransferase [isomerizing] from Vibrio vulnificus (strain CMCP6).